The chain runs to 307 residues: Probable protein S-acyltransferase 14 (307 aa).

Helical transmembrane passes span 22–42 (LGSIMILLVLGVVGVTYYAVV) and 63–83 (ILILFHFLLAMLLWSYFSVVF). One can recognise a DHHC domain in the interval 127-177 (RFCRKCNQLKPSRCHHCSVCGRCVLKMDHHCVWVVNCVGALNYKYFLLFLF). Cysteine 157 functions as the S-palmitoyl cysteine intermediate in the catalytic mechanism. 2 helical membrane-spanning segments follow: residues 171–191 (YFLLFLFYTFLETTLVTLVLM) and 213–233 (TFLAFVLNLAFALSVMGFLIM).

The protein belongs to the DHHC palmitoyltransferase family.

Its subcellular location is the golgi apparatus. The protein resides in the trans-Golgi network membrane. It catalyses the reaction L-cysteinyl-[protein] + hexadecanoyl-CoA = S-hexadecanoyl-L-cysteinyl-[protein] + CoA. Palmitoyl acyltransferase. The sequence is that of Probable protein S-acyltransferase 14 (PAT14) from Arabidopsis thaliana (Mouse-ear cress).